We begin with the raw amino-acid sequence, 1021 residues long: PDZ domain-containing protein 7 (1021 aa).

2 consecutive PDZ domains span residues 86–156 (AVRV…LTSS) and 210–279 (IVHL…EVLK). Residues 324–344 (SSSSVSSYASSAPCSSGSLPS) are compositionally biased toward low complexity. Disordered stretches follow at residues 324-345 (SSSS…LPSD), 431-495 (ITRS…DSRS), and 724-814 (RRGA…HRPR). Over residues 729–744 (APPPQPPPVAPRPPRP) the composition is skewed to pro residues. Positions 758–767 (QQNQSQTPAQ) are enriched in polar residues. Over residues 772 to 794 (SRSRSRSRSHSRGQGKSPGRRRS) the composition is skewed to basic residues. Over residues 799–808 (PIATAATANG) the composition is skewed to low complexity. In terms of domain architecture, PDZ 3 spans 858–930 (TITLSKMKQS…QRAVDTIRRA (73 aa)). The disordered stretch occupies residues 992-1021 (QLQQSLSSALKVPQSIPKLSPILKDPHDPS).

As to quaternary structure, homodimerizes (via PDZ2 domain). Component of USH2 complex, composed of ADGRV1, PDZD7, USH2A and WHRN. Interacts (via PDZ domains) with WHRN; the interaction is direct. Interacts with USH1G. Interacts with ADGRV1 (via the cytoplasmic region). Interacts with USH2A (via the cytoplasmic region). Interacts with MYO7A (via MyTH4-FERM domains). As to expression, isoform 1 is expressed in developing and adult cochlea but not retina. Isoform 2 is expressed in developing and adult cochlea and retina. Isoform 3 is expressed in adult cochlea and retina. Isoform 4 is expressed in retina and developing cochlea but not adult cochlea. Isoform 5 is expressed in adult cochlea but not in developing cochlea or retina.

It is found in the cell projection. The protein resides in the cilium. It localises to the nucleus. The protein localises to the stereocilium. Functionally, in cochlear developing hair cells, essential in organizing the USH2 complex at stereocilia ankle links. Blocks inhibition of adenylate cyclase activity mediated by ADGRV1. This chain is PDZ domain-containing protein 7, found in Mus musculus (Mouse).